The chain runs to 205 residues: Holliday junction branch migration complex subunit RuvA (205 aa).

Positions 1-64 are domain I; sequence MIGKLKGVID…EDQIKLFGFR (64 aa). A domain II region spans residues 65-143; sequence TDHEREWFRL…SFANVDPTVV (79 aa). The segment at 144-154 is flexible linker; it reads HLAGDLDDQRA. Positions 154–205 are domain III; that stretch reads APRPVRDAISALVNLGYGQPQATAAIAAASRGAGENAETAQLIRLGLKELSK.

The protein belongs to the RuvA family. As to quaternary structure, homotetramer. Forms an RuvA(8)-RuvB(12)-Holliday junction (HJ) complex. HJ DNA is sandwiched between 2 RuvA tetramers; dsDNA enters through RuvA and exits via RuvB. An RuvB hexamer assembles on each DNA strand where it exits the tetramer. Each RuvB hexamer is contacted by two RuvA subunits (via domain III) on 2 adjacent RuvB subunits; this complex drives branch migration. In the full resolvosome a probable DNA-RuvA(4)-RuvB(12)-RuvC(2) complex forms which resolves the HJ.

The protein resides in the cytoplasm. In terms of biological role, the RuvA-RuvB-RuvC complex processes Holliday junction (HJ) DNA during genetic recombination and DNA repair, while the RuvA-RuvB complex plays an important role in the rescue of blocked DNA replication forks via replication fork reversal (RFR). RuvA specifically binds to HJ cruciform DNA, conferring on it an open structure. The RuvB hexamer acts as an ATP-dependent pump, pulling dsDNA into and through the RuvAB complex. HJ branch migration allows RuvC to scan DNA until it finds its consensus sequence, where it cleaves and resolves the cruciform DNA. The sequence is that of Holliday junction branch migration complex subunit RuvA from Nitrobacter winogradskyi (strain ATCC 25391 / DSM 10237 / CIP 104748 / NCIMB 11846 / Nb-255).